The sequence spans 252 residues: 2-succinyl-6-hydroxy-2,4-cyclohexadiene-1-carboxylate synthase (252 aa).

The protein belongs to the AB hydrolase superfamily. MenH family. In terms of assembly, monomer.

The enzyme catalyses 5-enolpyruvoyl-6-hydroxy-2-succinyl-cyclohex-3-ene-1-carboxylate = (1R,6R)-6-hydroxy-2-succinyl-cyclohexa-2,4-diene-1-carboxylate + pyruvate. Its pathway is quinol/quinone metabolism; 1,4-dihydroxy-2-naphthoate biosynthesis; 1,4-dihydroxy-2-naphthoate from chorismate: step 3/7. It functions in the pathway quinol/quinone metabolism; menaquinone biosynthesis. In terms of biological role, catalyzes a proton abstraction reaction that results in 2,5-elimination of pyruvate from 2-succinyl-5-enolpyruvyl-6-hydroxy-3-cyclohexene-1-carboxylate (SEPHCHC) and the formation of 2-succinyl-6-hydroxy-2,4-cyclohexadiene-1-carboxylate (SHCHC). This is 2-succinyl-6-hydroxy-2,4-cyclohexadiene-1-carboxylate synthase from Escherichia coli (strain ATCC 8739 / DSM 1576 / NBRC 3972 / NCIMB 8545 / WDCM 00012 / Crooks).